Consider the following 292-residue polypeptide: Mitochondrial fission regulator 1-like (292 aa).

Position 30 is a phosphothreonine (Thr30). Ser41 bears the Phosphoserine mark. A Phosphoserine; by AMPK modification is found at Ser103. 3 positions are modified to phosphoserine: Ser110, Ser224, and Ser225. Ser238 is subject to Phosphoserine; by AMPK. 2 positions are modified to phosphoserine: Ser261 and Ser273.

Belongs to the MTFR1 family. In terms of processing, phosphorylated by AMPK. Upon stress, phosphorylation at Ser-103 and Ser-238 by AMPK is sufficient to induce mitochondrial fragmentation.

The protein localises to the mitochondrion outer membrane. Mitochondrial protein required for adaptation of miochondrial dynamics to metabolic changes. Regulates mitochondrial morphology at steady state and mediates AMPK-dependent stress-induced mitochondrial fragmentation via the control of OPA1 levels. This is Mitochondrial fission regulator 1-like from Homo sapiens (Human).